The chain runs to 947 residues: Zinc finger protein 268 (947 aa).

The KRAB domain occupies 81–152 (LSFMDVFVDF…QAQVPNQTCP (72 aa)). S178 is modified (phosphoserine; by TBK1). 24 C2H2-type zinc fingers span residues 276 to 298 (FGCS…QQTH), 304 to 326 (YGCN…QRIH), 332 to 354 (HECS…QRIH), 360 to 382 (YECC…QKTH), 388 to 410 (YVCN…ERIH), 416 to 438 (YECN…QRTH), 444 to 466 (YVCS…QGIH), 472 to 494 (YGCI…QRSH), 500 to 522 (YVCN…TRTH), 528 to 550 (HECN…QRIH), 556 to 578 (YECH…QRTH), 584 to 606 (YECT…QRTH), 612 to 634 (FECS…QRTH), 640 to 662 (YSCN…KGVH), 668 to 690 (YGCS…QRSH), 696 to 718 (YGCS…MRTH), 724 to 746 (HECR…QRIH), 752 to 774 (YECS…QRTH), 780 to 802 (YGCS…MRTH), 808 to 830 (YECN…ERTH), 836 to 858 (YKCS…QRMH), 864 to 886 (YECS…QRTH), 892 to 914 (YGCN…QRTH), and 920 to 942 (CKCT…QRTH).

This sequence belongs to the krueppel C2H2-type zinc-finger protein family. Interacts (via the KRAB domain) with TRIM28 (via the RBCC domain); the interaction increases ZNF268 nuclear localization activity. Isoform 2 interacts with CHUK and IKBKB; the interaction is further increased in a TNF-alpha-dependent manner. Interacts with TOLLIP; this interaction is impaired by ZNF268 phosphorylation at Ser-178. Forms a ternary complex with TBK1 and SETD4; the interaction between SETD4 and TBK1 is ZNF268-dependent and leads to TBK1 monomethylation. Post-translationally, phosphorylation at Ser-178 stabilizes the protein by interfering with its binding to TOLLIP, hence impairing its degradation by Tollip-mediated selective autophagy system. In terms of tissue distribution, overexpressed in ovarian cancer tissues compared to normal ovarian tissues. Isoform 1 and isoform 2 are expressed in squamous epithelium tissues. Isoform 2 is overexpressed in squamous cervical cancer (at protein level). Expressed in blood cells. Isoform 1 is expressed in pancreas, lung, skeletal muscle, heart, placenta, liver, kidney and brain. Isoform 2 expressed in chronic lymphocytic leukemia (CLL) and several tumor cell lines. Isoform 3 is expressed in several tumor cells. Isoform 5 is expressed in fetal liver and several tumor cells. Isoform 6 is weakly expressed in brain, lung amd small intestin and in several tumor cells. Isoform 7 is expressed in fetal liver and several tumor cells.

Its subcellular location is the nucleus. It is found in the cytoplasm. Functionally, acts as a transcriptional repressor. Inhibits erythroid differentiation and tumor cell proliferation. Plays a role during ovarian cancer development and progression. Contributes to cervical carcinogenesis in part through the TNF-alpha-induced NF-kappa-B signaling pathway by interacting with the I-kappa-B-kinase (IKK) core complex. In terms of biological role, involved in the regulation of antiviral interferon signaling. During viral infection, recruits SETD4 to TBK1, leading to TBK1 monomethylation, which is critical for the assembly of TBK1 complex and IRF3 signaling. The chain is Zinc finger protein 268 (ZNF268) from Homo sapiens (Human).